Reading from the N-terminus, the 201-residue chain is Small ribosomal subunit protein uS4 (201 aa).

The S4 RNA-binding domain maps to 91-154 (TRLDNVVYRA…RKMEWFEEAQ (64 aa)).

This sequence belongs to the universal ribosomal protein uS4 family. Part of the 30S ribosomal subunit. Contacts protein S5. The interaction surface between S4 and S5 is involved in control of translational fidelity.

Functionally, one of the primary rRNA binding proteins, it binds directly to 16S rRNA where it nucleates assembly of the body of the 30S subunit. In terms of biological role, with S5 and S12 plays an important role in translational accuracy. The polypeptide is Small ribosomal subunit protein uS4 (Corynebacterium ammoniagenes (Brevibacterium ammoniagenes)).